Here is a 425-residue protein sequence, read N- to C-terminus: Probable sucrose-phosphatase 3a (425 aa).

It belongs to the sucrose phosphatase family. Homodimer. Requires Mg(2+) as cofactor.

The catalysed reaction is sucrose 6(F)-phosphate + H2O = sucrose + phosphate. Its pathway is glycan biosynthesis; sucrose biosynthesis; sucrose from D-fructose 6-phosphate and UDP-alpha-D-glucose: step 2/2. In terms of biological role, catalyzes the final step of sucrose synthesis. The protein is Probable sucrose-phosphatase 3a (SPP3A) of Arabidopsis thaliana (Mouse-ear cress).